A 315-amino-acid polypeptide reads, in one-letter code: Methionyl-tRNA formyltransferase (315 aa).

110–113 (SLLP) contributes to the (6S)-5,6,7,8-tetrahydrofolate binding site.

This sequence belongs to the Fmt family.

It carries out the reaction L-methionyl-tRNA(fMet) + (6R)-10-formyltetrahydrofolate = N-formyl-L-methionyl-tRNA(fMet) + (6S)-5,6,7,8-tetrahydrofolate + H(+). Functionally, attaches a formyl group to the free amino group of methionyl-tRNA(fMet). The formyl group appears to play a dual role in the initiator identity of N-formylmethionyl-tRNA by promoting its recognition by IF2 and preventing the misappropriation of this tRNA by the elongation apparatus. The protein is Methionyl-tRNA formyltransferase of Cutibacterium acnes (strain DSM 16379 / KPA171202) (Propionibacterium acnes).